Consider the following 727-residue polypeptide: Glucans biosynthesis glucosyltransferase H (727 aa).

Residues 18–43 form a disordered region; sequence SAMPNERPGAMEPQSLSQMPEGFPRR. 7 helical membrane passes run 58 to 78, 94 to 114, 278 to 298, 408 to 428, 460 to 480, 496 to 516, and 572 to 592; these read FFVV…MGAV, LFAI…AGFF, LQQF…GWWV, IMAY…LMLA, LFYI…LLLL, ILSV…MMFI, and LLAW…ISAW.

It belongs to the glycosyltransferase 2 family. OpgH subfamily.

The protein resides in the cell inner membrane. Its pathway is glycan metabolism; osmoregulated periplasmic glucan (OPG) biosynthesis. In terms of biological role, involved in the biosynthesis of osmoregulated periplasmic glucans (OPGs). The chain is Glucans biosynthesis glucosyltransferase H from Shewanella sp. (strain ANA-3).